We begin with the raw amino-acid sequence, 215 residues long: GTP-binding nuclear protein Ran (215 aa).

Residues 6-170 (DIPTFKLVLV…LWLARKLLGD (165 aa)) enclose the Small GTPase Ran-type domain. GTP is bound by residues 17–24 (DGGTGKTT), 35–41 (EKKYVAT), Gly-67, 121–124 (NKVD), and 149–151 (SAK). The tract at residues 36–44 (KKYVATLGV) is switch-I. The switch-II stretch occupies residues 67–83 (GQEKFGGLRDGYYIQGQ).

The protein belongs to the small GTPase superfamily. Ran family. In terms of assembly, found in a nuclear export complex with RanGTP, exportin and pre-miRNA.

It localises to the nucleus. Its function is as follows. GTP-binding protein involved in nucleocytoplasmic transport. Required for the import of protein into the nucleus and also for RNA export. Involved in chromatin condensation and control of cell cycle. The protein is GTP-binding nuclear protein Ran of Brugia malayi (Filarial nematode worm).